A 432-amino-acid polypeptide reads, in one-letter code: Gamma-glutamyl phosphate reductase (432 aa).

Belongs to the gamma-glutamyl phosphate reductase family.

It is found in the cytoplasm. It catalyses the reaction L-glutamate 5-semialdehyde + phosphate + NADP(+) = L-glutamyl 5-phosphate + NADPH + H(+). The protein operates within amino-acid biosynthesis; L-proline biosynthesis; L-glutamate 5-semialdehyde from L-glutamate: step 2/2. Functionally, catalyzes the NADPH-dependent reduction of L-glutamate 5-phosphate into L-glutamate 5-semialdehyde and phosphate. The product spontaneously undergoes cyclization to form 1-pyrroline-5-carboxylate. The sequence is that of Gamma-glutamyl phosphate reductase from Ruminiclostridium cellulolyticum (strain ATCC 35319 / DSM 5812 / JCM 6584 / H10) (Clostridium cellulolyticum).